Consider the following 447-residue polypeptide: Probable glycine dehydrogenase (decarboxylating) subunit 1 (447 aa).

Belongs to the GcvP family. N-terminal subunit subfamily. The glycine cleavage system is composed of four proteins: P, T, L and H. In this organism, the P 'protein' is a heterodimer of two subunits.

The catalysed reaction is N(6)-[(R)-lipoyl]-L-lysyl-[glycine-cleavage complex H protein] + glycine + H(+) = N(6)-[(R)-S(8)-aminomethyldihydrolipoyl]-L-lysyl-[glycine-cleavage complex H protein] + CO2. In terms of biological role, the glycine cleavage system catalyzes the degradation of glycine. The P protein binds the alpha-amino group of glycine through its pyridoxal phosphate cofactor; CO(2) is released and the remaining methylamine moiety is then transferred to the lipoamide cofactor of the H protein. The polypeptide is Probable glycine dehydrogenase (decarboxylating) subunit 1 (Halalkalibacterium halodurans (strain ATCC BAA-125 / DSM 18197 / FERM 7344 / JCM 9153 / C-125) (Bacillus halodurans)).